The chain runs to 332 residues: MTKPIVLSGAQPSGELTIGNYMGALRQWVAMQDSHDCLYCVVDLHAITVRQDPQALREACLDTLALYLACGVDPKKSTVFIQSQVPQHTQLGWALNCYTQMGELSRMTQFKDKSQKHANNINVGLFGYPVLMAADILLYQANEIPVGQDQKQHLELTRDIATRFNNAYGETFTIPEPFIPEHGAKVMSLQDPLKKMSKSDDNRNNVIGLLEDPKAVMKKLKKAMTDSDEPPVVRFDIENKPGVSNLLSLMSGITGQSIASLEAEFEGKMYGHLKGAAGEAVVGMLEPLQERYRALRADRAYLDQVMRAGAENAQARAEVTLKKVYEKIGLLV.

ATP contacts are provided by residues 11–13 (QPS) and 19–20 (GN). Positions 12-20 (PSGELTIGN) match the 'HIGH' region motif. L-tryptophan is bound at residue Asp135. ATP contacts are provided by residues 147–149 (GQD), Val186, and 195–199 (KMSKS). Residues 195–199 (KMSKS) carry the 'KMSKS' region motif.

Belongs to the class-I aminoacyl-tRNA synthetase family. As to quaternary structure, homodimer.

It localises to the cytoplasm. The enzyme catalyses tRNA(Trp) + L-tryptophan + ATP = L-tryptophyl-tRNA(Trp) + AMP + diphosphate + H(+). In terms of biological role, catalyzes the attachment of tryptophan to tRNA(Trp). This is Tryptophan--tRNA ligase from Shewanella oneidensis (strain ATCC 700550 / JCM 31522 / CIP 106686 / LMG 19005 / NCIMB 14063 / MR-1).